The sequence spans 479 residues: Sulfate adenylyltransferase subunit 1 (479 aa).

Residues 25 to 239 (KSLLRFLTCG…EVLETVDIQR (215 aa)) form the tr-type G domain. The tract at residues 34 to 41 (GSVDDGKS) is G1. 34–41 (GSVDDGKS) serves as a coordination point for GTP. The interval 92–96 (GITID) is G2. Residues 113–116 (DTPG) form a G3 region. GTP contacts are provided by residues 113–117 (DTPGH) and 168–171 (NKMD). Positions 168-171 (NKMD) are G4. A G5 region spans residues 206 to 208 (SAL).

The protein belongs to the TRAFAC class translation factor GTPase superfamily. Classic translation factor GTPase family. CysN/NodQ subfamily. In terms of assembly, heterodimer composed of CysD, the smaller subunit, and CysN.

The enzyme catalyses sulfate + ATP + H(+) = adenosine 5'-phosphosulfate + diphosphate. It functions in the pathway sulfur metabolism; hydrogen sulfide biosynthesis; sulfite from sulfate: step 1/3. In terms of biological role, with CysD forms the ATP sulfurylase (ATPS) that catalyzes the adenylation of sulfate producing adenosine 5'-phosphosulfate (APS) and diphosphate, the first enzymatic step in sulfur assimilation pathway. APS synthesis involves the formation of a high-energy phosphoric-sulfuric acid anhydride bond driven by GTP hydrolysis by CysN coupled to ATP hydrolysis by CysD. The protein is Sulfate adenylyltransferase subunit 1 of Salmonella typhimurium (strain LT2 / SGSC1412 / ATCC 700720).